A 410-amino-acid chain; its full sequence is Adenosine receptor A2a (410 aa).

Residues 1–4 (MGSS) lie on the Extracellular side of the membrane. A helical transmembrane segment spans residues 5–29 (VYITVELAIAVLAILGNVLVCWAVW). Over 30–39 (INSNLQNVTN) the chain is Cytoplasmic. A helical membrane pass occupies residues 40–63 (FFVVSLAAADIAVGVLAIPFAITI). The Extracellular segment spans residues 64 to 74 (STGFCAACHGC). 3 disulfides stabilise this stretch: C68–C154, C71–C143, and C74–C161. The chain crosses the membrane as a helical span at residues 75–97 (LFFACFVLVLTQSSIFSLLAIAI). Residues 98–117 (DRYIAIRIPLRYNGLVTGVR) are Cytoplasmic-facing. A helical transmembrane segment spans residues 118 to 140 (AKGIIAICWVLSFAIGLTPMLGW). Topologically, residues 141-168 (NNCSQKDGNSTKTCGEGRVTCLFEDVVP) are extracellular. 2 N-linked (GlcNAc...) asparagine glycosylation sites follow: N142 and N149. E164 is an adenosine binding site. The chain crosses the membrane as a helical span at residues 169 to 193 (MNYMVYYNFFAFVLLPLLLMLAIYL). The Cytoplasmic portion of the chain corresponds to 194 to 229 (RIFLAARRQLKQMESQPLPGERTRSTLQKEVHAAKS). The helical transmembrane segment at 230–253 (LAIIVGLFALCWLPLHIINCFTFF) threads the bilayer. An adenosine-binding site is contributed by N248. C254 and C257 are disulfide-bonded. Topologically, residues 254–261 (CSTCRHAP) are extracellular. A helical membrane pass occupies residues 262 to 285 (PWLMYLAIILSHSNSVVNPFIYAY). Adenosine-binding residues include S272 and H273. Over 286–410 (RIREFRQTFR…SSWSSEFAPS (125 aa)) the chain is Cytoplasmic. The segment at 322-410 (HSTEGEQVSL…SSWSSEFAPS (89 aa)) is interaction with GAS2L2. The segment at 344–410 (GSATHSGRRP…SSWSSEFAPS (67 aa)) is disordered. Residues 371–388 (RDVELPTQERQEGQEHPG) show a composition bias toward basic and acidic residues. Polar residues predominate over residues 401 to 410 (SSWSSEFAPS).

Belongs to the G-protein coupled receptor 1 family. As to quaternary structure, interacts (via cytoplasmic C-terminal domain) with USP4; the interaction is direct. May interact with DRD4. Interacts with NECAB2. Interacts (via cytoplasmic C-terminal domain) with GAS2L2; interaction enhances receptor-mediated adenylyl cyclase activity. Post-translationally, ubiquitinated. Deubiquitinated by USP4; leading to stabilization and expression at the cell surface. As to expression, expressed in striatal neurons (at protein level).

It localises to the cell membrane. Functionally, receptor for adenosine. The activity of this receptor is mediated by G proteins which activate adenylyl cyclase. The protein is Adenosine receptor A2a (Adora2a) of Rattus norvegicus (Rat).